Reading from the N-terminus, the 1097-residue chain is Platelet-derived growth factor receptor beta (1097 aa).

The first 31 residues, 1–31, serve as a signal peptide directing secretion; it reads MGLPEVMPASVLRGQLLLFVLLLLGPQISQG. Ig-like C2-type domains are found at residues 32–119, 128–209, and 213–308; these read LVIT…YIFV, PMDS…YSLQ, and INVS…INVT. The Extracellular segment spans residues 32 to 531; sequence LVITPPGPEF…VVPHSLPFKV (500 aa). Residues Asn-44, Asn-88, and Asn-102 are each glycosylated (N-linked (GlcNAc...) asparagine). An intrachain disulfide couples Cys-53 to Cys-99. Cys-148 and Cys-189 are oxidised to a cystine. Residue Asn-214 is glycosylated (N-linked (GlcNAc...) asparagine). Residues Cys-234 and Cys-290 are joined by a disulfide bond. Residues Asn-291, Asn-306, Asn-353, Asn-370, Asn-444, Asn-467, and Asn-478 are each glycosylated (N-linked (GlcNAc...) asparagine). One can recognise an Ig-like C2-type 4 domain in the interval 415–523; it reads PVRVLELSES…GRDSQEVTVV (109 aa). A disulfide bond links Cys-435 and Cys-507. Residues 532–552 form a helical membrane-spanning segment; the sequence is VVISAILALVVLTVISLIILI. The Cytoplasmic portion of the chain corresponds to 553–1097; it reads MLWQRKPRYE…PLAEAEDSFL (545 aa). Tyr-561, Tyr-578, and Tyr-580 each carry phosphotyrosine; by autocatalysis. In terms of domain architecture, Protein kinase spans 599–961; that stretch reads LVLGRTLGSG…QLVLLLERLL (363 aa). ATP contacts are provided by residues 605–613 and Lys-633; that span reads LGSGAFGQV. Residue Tyr-685 is modified to Phosphotyrosine; by ABL1 and ABL2. Residues Tyr-715, Tyr-739, Tyr-750, Tyr-762, Tyr-770, Tyr-774, and Tyr-777 each carry the phosphotyrosine; by autocatalysis modification. Residue Asp-825 is the Proton acceptor of the active site. Tyr-856 carries the post-translational modification Phosphotyrosine; by autocatalysis. Phosphotyrosine; by ABL1 and ABL2 occurs at positions 933 and 969. Phosphotyrosine; by autocatalysis occurs at positions 1008 and 1020. A disordered region spans residues 1016-1097; sequence TDNDYIIPLP…PLAEAEDSFL (82 aa). A compositionally biased stretch (polar residues) spans 1042-1059; the sequence is SLASSTLNEVNTSSTISC. The segment covering 1072 to 1081 has biased composition (low complexity); it reads EPEAQLEQPQ.

Belongs to the protein kinase superfamily. Tyr protein kinase family. CSF-1/PDGF receptor subfamily. As to quaternary structure, interacts with homodimeric PDGFB and PDGFD, and with heterodimers formed by PDGFA and PDGFB. May also interact with homodimeric PDGFC. Monomer in the absence of bound ligand. Interaction with homodimeric PDGFB, heterodimers formed by PDGFA and PDGFB or homodimeric PDGFD, leads to receptor dimerization, where both PDGFRA homodimers and heterodimers with PDGFRB are observed. Interacts with SH2B2/APS. Interacts directly (tyrosine phosphorylated) with SHB. Interacts (tyrosine phosphorylated) with PIK3R1 and RASA1. Interacts (tyrosine phosphorylated) with CBL. Interacts (tyrosine phosphorylated) with SRC and SRC family kinases. Interacts (tyrosine phosphorylated) with PIK3C2B, maybe indirectly. Interacts (tyrosine phosphorylated) with SHC1, GRB7, GRB10 and NCK1. Interaction with GRB2 is mediated by SHC1. Interacts (via C-terminus) with NHERF1. N-glycosylated. In terms of processing, ubiquitinated. After autophosphorylation, the receptor is polyubiquitinated, leading to its degradation. Post-translationally, autophosphorylated on tyrosine residues upon ligand binding. Autophosphorylation occurs in trans, i.e. one subunit of the dimeric receptor phosphorylates tyrosine residues on the other subunit. Phosphorylation at Tyr-578, and to a lesser degree, Tyr-580 is important for interaction with SRC. Phosphorylation at Tyr-715 is important for interaction with GRB2. Phosphorylation at Tyr-739 and Tyr-750 is important for interaction with PIK3R1. Phosphorylation at Tyr-750 is important for interaction with NCK1. Phosphorylation at Tyr-770 and Tyr-856 is important for interaction with RASA1/GAP. Phosphorylation at Tyr-856 is important for efficient phosphorylation of PLCG1 and PTPN11, resulting in increased phosphorylation of AKT1, MAPK1/ERK2 and/or MAPK3/ERK1, PDCD6IP/ALIX and STAM, and in increased cell proliferation. Phosphorylation at Tyr-1008 is important for interaction with PTPN11. Phosphorylation at Tyr-1008 and Tyr-1020 is important for interaction with PLCG1. Dephosphorylated by PTPRJ at Tyr-750, Tyr-856, Tyr-1008 and Tyr-1020. Dephosphorylated by PTPN2 at Tyr-578 and Tyr-1020.

Its subcellular location is the cell membrane. It is found in the cytoplasmic vesicle. The protein localises to the lysosome lumen. The enzyme catalyses L-tyrosyl-[protein] + ATP = O-phospho-L-tyrosyl-[protein] + ADP + H(+). With respect to regulation, present in an inactive conformation in the absence of bound ligand. Binding of PDGFB and/or PDGFD leads to dimerization and activation by autophosphorylation on tyrosine residues. Functionally, tyrosine-protein kinase that acts as a cell-surface receptor for homodimeric PDGFB and PDGFD and for heterodimers formed by PDGFA and PDGFB, and plays an essential role in the regulation of embryonic development, cell proliferation, survival, differentiation, chemotaxis and migration. Plays an essential role in blood vessel development by promoting proliferation, migration and recruitment of pericytes and smooth muscle cells to endothelial cells. Plays a role in the migration of vascular smooth muscle cells and the formation of neointima at vascular injury sites. Required for normal development of the cardiovascular system. Required for normal recruitment of pericytes (mesangial cells) in the kidney glomerulus, and for normal formation of a branched network of capillaries in kidney glomeruli. Promotes rearrangement of the actin cytoskeleton and the formation of membrane ruffles. Binding of its cognate ligands - homodimeric PDGFB, heterodimers formed by PDGFA and PDGFB or homodimeric PDGFD -leads to the activation of several signaling cascades; the response depends on the nature of the bound ligand and is modulated by the formation of heterodimers between PDGFRA and PDGFRB. Phosphorylates PLCG1, PIK3R1, PTPN11, RASA1/GAP, CBL, SHC1 and NCK1. Activation of PLCG1 leads to the production of the cellular signaling molecules diacylglycerol and inositol 1,4,5-trisphosphate, mobilization of cytosolic Ca(2+) and the activation of protein kinase C. Phosphorylation of PIK3R1, the regulatory subunit of phosphatidylinositol 3-kinase, leads to the activation of the AKT1 signaling pathway. Phosphorylation of SHC1, or of the C-terminus of PTPN11, creates a binding site for GRB2, resulting in the activation of HRAS, RAF1 and down-stream MAP kinases, including MAPK1/ERK2 and/or MAPK3/ERK1. Promotes phosphorylation and activation of SRC family kinases. Promotes phosphorylation of PDCD6IP/ALIX and STAM. Receptor signaling is down-regulated by protein phosphatases that dephosphorylate the receptor and its down-stream effectors, and by rapid internalization of the activated receptor. This is Platelet-derived growth factor receptor beta (Pdgfrb) from Rattus norvegicus (Rat).